The following is a 661-amino-acid chain: UvrABC system protein B (661 aa).

The 158-residue stretch at 25–182 (AGLSSKKRSQ…NDLINLQYER (158 aa)) folds into the Helicase ATP-binding domain. 38–45 (GITGSGKT) contributes to the ATP binding site. The Beta-hairpin motif lies at 91 to 114 (YYDYYQPEAYIARTDTFIEKDSSI). A Helicase C-terminal domain is found at 430 to 592 (QVEDLISEIQ…IIPKTINRAI (163 aa)). In terms of domain architecture, UVR spans 621 to 656 (KTHIDKLKKEMLKAASNLEFEQAVKLRDQLKTLEEA).

Belongs to the UvrB family. As to quaternary structure, forms a heterotetramer with UvrA during the search for lesions. Interacts with UvrC in an incision complex.

It is found in the cytoplasm. The UvrABC repair system catalyzes the recognition and processing of DNA lesions. A damage recognition complex composed of 2 UvrA and 2 UvrB subunits scans DNA for abnormalities. Upon binding of the UvrA(2)B(2) complex to a putative damaged site, the DNA wraps around one UvrB monomer. DNA wrap is dependent on ATP binding by UvrB and probably causes local melting of the DNA helix, facilitating insertion of UvrB beta-hairpin between the DNA strands. Then UvrB probes one DNA strand for the presence of a lesion. If a lesion is found the UvrA subunits dissociate and the UvrB-DNA preincision complex is formed. This complex is subsequently bound by UvrC and the second UvrB is released. If no lesion is found, the DNA wraps around the other UvrB subunit that will check the other stand for damage. This is UvrABC system protein B from Rickettsia rickettsii (strain Sheila Smith).